The following is a 391-amino-acid chain: Phosphoglycerate kinase (391 aa).

Substrate-binding positions include D21 to N23, R36, H59 to R62, R113, and R146. ATP is bound by residues K197, E319, and G345 to T348.

This sequence belongs to the phosphoglycerate kinase family. As to quaternary structure, monomer.

The protein localises to the cytoplasm. It catalyses the reaction (2R)-3-phosphoglycerate + ATP = (2R)-3-phospho-glyceroyl phosphate + ADP. The protein operates within carbohydrate degradation; glycolysis; pyruvate from D-glyceraldehyde 3-phosphate: step 2/5. This is Phosphoglycerate kinase from Shewanella baltica (strain OS185).